Here is a 297-residue protein sequence, read N- to C-terminus: Retroviral cyclin (297 aa).

The Cyclin N-terminal domain occupies 21–113; the sequence is PVYWKELLNW…KPSLLLTETM (93 aa). Residues 21 to 113 are transcription activation domain; the sequence is PVYWKELLNW…KPSLLLTETM (93 aa). A coiled-coil region spans residues 222 to 270; that stretch reads QINLDFAEAEQREAAERRALLEREREQQLQEARERLDDVMAVLEAEVAI.

It belongs to the cyclin family. Interacts (via transcription activation domain) with host TAF9 in vitro. Interacts with host CDK3 and CDK8.

It localises to the host nucleus. In terms of biological role, transforming protein which induces the development of dermal sarcomas. Induces positive and negative regulation of transcription from host and viral promoters by interacting with various cellular factors involved in protein transcription regulation. This is Retroviral cyclin (orfA) from Sander vitreus (Walleye).